The following is a 61-amino-acid chain: ORF6 protein (61 aa).

Residues 18–24 (IMRTFKV) are important for host Golgi localization.

It belongs to the coronaviruses accessory protein 6 family. Interacts (via C-terminus) with host RAE1 in the NUP98-RAE1 complex; this interaction disrupts the host nuclear import. Interacts with host KPNA2; this interaction may inhibit IFN-beta production by blocking IRF3 nuclear translocation.

The protein localises to the host endoplasmic reticulum membrane. The protein resides in the host Golgi apparatus membrane. Its function is as follows. Disrupts bidirectional nucleocytoplasmic transport by interacting with the host RAE1-NUP98 complex. Disrupts cell nuclear import complex formation by tethering karyopherin alpha 2 and karyopherin beta 1 to the membrane. Retention of import factors at the ER/Golgi membrane leads to a loss of transport into the nucleus. Prevents STAT1 nuclear translocation in response to interferon signaling, thus blocking the expression of interferon stimulated genes (ISGs) that display multiple antiviral activities. Suppresses IFN-beta production possibly by blocking IRF3 nuclear translocation. Might induce accumulation of host HNRNPA1. May play a role in viral double membrane vesicles networks to enhance viral replication. In Homo sapiens (Human), this protein is ORF6 protein.